Consider the following 554-residue polypeptide: ATP synthase subunit alpha (554 aa).

173–180 (GDRQTGKT) is a binding site for ATP. The tract at residues 531-554 (SHLAAEKVRKHVPPSKPTTQRTAG) is disordered.

The protein belongs to the ATPase alpha/beta chains family. In terms of assembly, F-type ATPases have 2 components, CF(1) - the catalytic core - and CF(0) - the membrane proton channel. CF(1) has five subunits: alpha(3), beta(3), gamma(1), delta(1), epsilon(1). CF(0) has three main subunits: a(1), b(2) and c(9-12). The alpha and beta chains form an alternating ring which encloses part of the gamma chain. CF(1) is attached to CF(0) by a central stalk formed by the gamma and epsilon chains, while a peripheral stalk is formed by the delta and b chains.

Its subcellular location is the cell membrane. The enzyme catalyses ATP + H2O + 4 H(+)(in) = ADP + phosphate + 5 H(+)(out). Functionally, produces ATP from ADP in the presence of a proton gradient across the membrane. The alpha chain is a regulatory subunit. The polypeptide is ATP synthase subunit alpha (Acidothermus cellulolyticus (strain ATCC 43068 / DSM 8971 / 11B)).